We begin with the raw amino-acid sequence, 1159 residues long: Protocadherin-17 (1159 aa).

The first 17 residues, 1–17 (MYLSICCCFLLWAPALT), serve as a signal peptide directing secretion. 6 consecutive Cadherin domains span residues 18 to 132 (LKNL…APSF), 133 to 243 (SSDQ…SPVF), 244 to 351 (EAPS…APSI), 353 to 472 (FVSV…PPRF), 473 to 583 (TKGL…APVI), and 589 to 695 (QNDT…VPRV). Over 18-707 (LKNLNYSVPE…EQHHWDMSLP (690 aa)) the chain is Extracellular. A glycan (N-linked (GlcNAc...) asparagine) is linked at Asn22. A Cell attachment site motif is present at residues 186–188 (RGD). 6 N-linked (GlcNAc...) asparagine glycosylation sites follow: Asn266, Asn439, Asn453, Asn504, Asn566, and Asn590. A helical transmembrane segment spans residues 708–728 (LIVTLSTISIILLAAMITIAV). Over 729-1159 (KCKRENKEIR…RGNDPVAVRK (431 aa)) the chain is Cytoplasmic. Disordered regions lie at residues 858-909 (NFPA…KGSC) and 1108-1132 (SRDSSEMGAVLEQLDHPNRDLGRES). Residues 867-879 (GSRQQFVQSSSTF) show a composition bias toward polar residues. Composition is skewed to basic and acidic residues over residues 880 to 895 (KDPERASLRDSGHGDS) and 1120 to 1132 (QLDHPNRDLGRES).

Its subcellular location is the cell membrane. In terms of biological role, potential calcium-dependent cell-adhesion protein. The polypeptide is Protocadherin-17 (PCDH17) (Homo sapiens (Human)).